A 310-amino-acid polypeptide reads, in one-letter code: Ribosomal RNA small subunit methyltransferase H (310 aa).

S-adenosyl-L-methionine contacts are provided by residues 32–34 (GGH), D52, F79, D100, and Q107.

Belongs to the methyltransferase superfamily. RsmH family.

Its subcellular location is the cytoplasm. The enzyme catalyses cytidine(1402) in 16S rRNA + S-adenosyl-L-methionine = N(4)-methylcytidine(1402) in 16S rRNA + S-adenosyl-L-homocysteine + H(+). In terms of biological role, specifically methylates the N4 position of cytidine in position 1402 (C1402) of 16S rRNA. This is Ribosomal RNA small subunit methyltransferase H from Bacillus mycoides (strain KBAB4) (Bacillus weihenstephanensis).